A 594-amino-acid polypeptide reads, in one-letter code: Putative phospholipase B-like 2 (594 aa).

An N-terminal signal peptide occupies residues 1–46; the sequence is MAAPVDGSSGGWAARALRRALALTSLTTLALLASLTGLLLSGPAGA. N-linked (GlcNAc...) asparagine glycosylation is found at Asn93 and Asn115. A disulfide bridge links Cys147 with Cys157. N-linked (GlcNAc...) asparagine glycosylation is found at Asn236 and Asn441. The cysteines at positions 497 and 500 are disulfide-linked. Asn520 is a glycosylation site (N-linked (GlcNAc...) asparagine).

The protein belongs to the phospholipase B-like family. Interacts with IGF2R. In terms of processing, the p76 protein is synthesized as a 76 kDa precursor which is then processed into a N-terminal 28 kDa form and a C-terminal 40 kDa form. The C-terminal peptide is further processed into a 15 kDa form. Glycosylated; contains mannose 6-phosphate sugars. As to expression, present at highest levels in spleen, lung and brain (at protein level).

The protein resides in the lysosome lumen. Its function is as follows. Putative phospholipase. The sequence is that of Putative phospholipase B-like 2 (Plbd2) from Mus musculus (Mouse).